A 200-amino-acid polypeptide reads, in one-letter code: Small ribosomal subunit protein uS4 (200 aa).

The S4 RNA-binding domain maps to 106 to 170 (RRLQTIVFKK…SPIANELHPI (65 aa)). A disordered region spans residues 178–200 (AERVKEEAEKEAAASEDGGEQDE). The segment covering 179-190 (ERVKEEAEKEAA) has biased composition (basic and acidic residues).

It belongs to the universal ribosomal protein uS4 family. Part of the 30S ribosomal subunit. Contacts protein S5. The interaction surface between S4 and S5 is involved in control of translational fidelity.

Its function is as follows. One of the primary rRNA binding proteins, it binds directly to 16S rRNA where it nucleates assembly of the body of the 30S subunit. In terms of biological role, with S5 and S12 plays an important role in translational accuracy. The polypeptide is Small ribosomal subunit protein uS4 (Thermoplasma volcanium (strain ATCC 51530 / DSM 4299 / JCM 9571 / NBRC 15438 / GSS1)).